A 196-amino-acid chain; its full sequence is Imidazoleglycerol-phosphate dehydratase (196 aa).

The protein belongs to the imidazoleglycerol-phosphate dehydratase family.

The protein resides in the cytoplasm. It catalyses the reaction D-erythro-1-(imidazol-4-yl)glycerol 3-phosphate = 3-(imidazol-4-yl)-2-oxopropyl phosphate + H2O. It participates in amino-acid biosynthesis; L-histidine biosynthesis; L-histidine from 5-phospho-alpha-D-ribose 1-diphosphate: step 6/9. The chain is Imidazoleglycerol-phosphate dehydratase from Ralstonia nicotianae (strain ATCC BAA-1114 / GMI1000) (Ralstonia solanacearum).